The primary structure comprises 529 residues: MTLSPYLQEVAKRRTFAIISHPDAGKTTITEKVLLFGQAIQTAGTVKGRGSSQHAKSDWMEMEKQRGISITTSVMQFPYHDCLVNLLDTPGHEDFSEDTYRTLTAVDCCLMVIDAAKGVEDRTRKLMEVTRLRDTPILTFMNKLDRDIRDPMELLDEVENELKIGCAPITWPIGCGKLFKGVYHLYKDETYLYQTGKGHTIQEVRIVKGLNNPDLDAAVGEDLAQQLRDELELVQGASNEFDEELFLAGEITPVFFGTALGNFGVDHMLDGLVAWAPAPMPRQTDTRTVEASEERFTGFVFKIQANMDPKHRDRVAFMRVVSGKYEKGMKLRQVRTGKDVVISDALTFMAGDRSHVEEAYPGDILGLHNHGTIQIGDTFTQGEMMKFTGIPNFAPELFRRIRLKDPLKQKQLLKGLVQLSEEGAVQVFRPISNNDLIVGAVGVLQFDVVVARLKSEYNVEAIYESVNVATARWVESADAKKFEEFKRKNETQLALDGGDNLTYIAPTMVNLNLTQERYPDVQFRKTREH.

The tr-type G domain maps to alanine 11 to methionine 280. Residues serine 20–threonine 27, aspartate 88–histidine 92, and asparagine 142–aspartate 145 contribute to the GTP site.

This sequence belongs to the TRAFAC class translation factor GTPase superfamily. Classic translation factor GTPase family. PrfC subfamily.

Its subcellular location is the cytoplasm. Increases the formation of ribosomal termination complexes and stimulates activities of RF-1 and RF-2. It binds guanine nucleotides and has strong preference for UGA stop codons. It may interact directly with the ribosome. The stimulation of RF-1 and RF-2 is significantly reduced by GTP and GDP, but not by GMP. In Salmonella typhi, this protein is Peptide chain release factor 3 (prfC).